Here is a 451-residue protein sequence, read N- to C-terminus: Coproporphyrinogen III oxidase (451 aa).

Residues 10–15 (GGGISG), 36–37 (DP), 58–61 (GAEA), V242, W393, and 429–431 (IGV) each bind FAD.

The protein belongs to the protoporphyrinogen/coproporphyrinogen oxidase family. Coproporphyrinogen III oxidase subfamily. The cofactor is FAD.

Its subcellular location is the cytoplasm. It carries out the reaction coproporphyrinogen III + 3 O2 = coproporphyrin III + 3 H2O2. The protein operates within porphyrin-containing compound metabolism; protoheme biosynthesis. Involved in coproporphyrin-dependent heme b biosynthesis. Catalyzes the oxidation of coproporphyrinogen III to coproporphyrin III. The polypeptide is Coproporphyrinogen III oxidase (Mycobacterium leprae (strain TN)).